The chain runs to 37 residues: Potassium channel toxin alpha-KTx 1.11 (37 aa).

Disulfide bonds link Cys-7/Cys-28, Cys-13/Cys-33, and Cys-17/Cys-35.

This sequence belongs to the short scorpion toxin superfamily. Potassium channel inhibitor family. Alpha-KTx 01 subfamily. As to expression, expressed by the venom gland.

The protein resides in the secreted. Its function is as follows. Reversibly blocks the high conductance calcium-activated potassium channels composed of only alpha subunits (KCa1.1/KCNMA1). Unreversibly blocks the high conductance calcium-activated potassium channels composed of alpha and beta1 subunits (KCNMA1 and KCNMB1). Unreversibly and weakly blocks the high conductance calcium-activated potassium channels composed of alpha and beta4 (KCNMA1 and KCNMB4). This Centruroides noxius (Mexican scorpion) protein is Potassium channel toxin alpha-KTx 1.11.